The chain runs to 643 residues: Phosphoenolpyruvate carboxykinase [GTP] (643 aa).

Substrate is bound by residues R102 and Y253–G255. Mn(2+) contacts are provided by K262 and H282. Position 304 (S304) interacts with substrate. A305 to N310 serves as a coordination point for GTP. Residue C306 is part of the active site. Residue D329 participates in Mn(2+) binding. N422–R424 is a substrate binding site. Residues R424, R455, and Y548–N551 contribute to the GTP site.

This sequence belongs to the phosphoenolpyruvate carboxykinase [GTP] family. As to quaternary structure, monomer. Mn(2+) is required as a cofactor.

It catalyses the reaction oxaloacetate + GTP = phosphoenolpyruvate + GDP + CO2. Its function is as follows. In parasitic nematodes PEPCK carboxylates phosphoenolpyruvate to oxaloacetate thus introducing the products of glycolysis to mitochondrial metabolism. Functionally, catalyzes the conversion of oxaloacetate (OAA) to phosphoenolpyruvate (PEP), the rate-limiting step in the metabolic pathway that produces glucose from lactate and other precursors derived from the citric acid cycle. This Ascaris suum (Pig roundworm) protein is Phosphoenolpyruvate carboxykinase [GTP] (PEPCK).